The chain runs to 436 residues: MANPVVAIVGRPNVGKSTIFNRLAGERISIVEDTPGVTRDRIYARTEWLGHPFNLIDTGGIDIGDEPFLTQITEQAEIAIEEADVIIFVVSVKEGVTDADEKVARILYRTDKPVVLAVNKVDNPELRADIYDFYSLGFGEPIPVAGTHGIGTGDLLDKIIKEFPKDATNEEDDSIKFSFIGRPNVGKSSLVNAILGENRVIVSNIEGTTRDAIDTRFETEDGTKYTMIDTAGIRKKGKVYENTEKYSVLRAMRAIDRSDVVCVVLNAEEGIREQDKHVAGYAHEAGRAIVIVVNKWDTLKKDNKTMSDFENLIRQEFQYLSYAPIVFVSAKTKQRLDKLPELIKRVNDNHEQRISSAVLNDVVMDAIAHNPTPTDNGKRLRIYYATQVAIKPPTFVIFVNDPELMHFSYERFLENQIREAFDFEGTPIHIIERRRK.

EngA-type G domains follow at residues 4 to 167 (PVVA…PKDA) and 175 to 351 (IKFS…DNHE). GTP contacts are provided by residues 10-17 (GRPNVGKS), 57-61 (DTGGI), 119-122 (NKVD), 181-188 (GRPNVGKS), 229-233 (DTAGI), and 294-297 (NKWD). Positions 352-436 (QRISSAVLND…PIHIIERRRK (85 aa)) constitute a KH-like domain.

It belongs to the TRAFAC class TrmE-Era-EngA-EngB-Septin-like GTPase superfamily. EngA (Der) GTPase family. As to quaternary structure, associates with the 50S ribosomal subunit.

Its function is as follows. GTPase that plays an essential role in the late steps of ribosome biogenesis. The polypeptide is GTPase Der (Ligilactobacillus salivarius (strain UCC118) (Lactobacillus salivarius)).